The chain runs to 1780 residues: MMVFQSFILGNLVSLCMKIINSVVVVGLYYGFLTTFSIGPSYLFLLRARVMDEGEEGTEKKVSATTGFIAGQLMMFISIYYAPLHLALGRPHTITVLALPYLLFHFFWNNNKHFFDYGSTTRNEMRNLRIQCVFLNNLIFQLFNHFILPSSMLARLVNIYMFRCNNKMLFVTSSFVGWLIGHILFMKWVGLVLVWIQQNNSIRSNVLIRSNKYKFLVSELRNSMARIFSILLFITCVYYLGRTPSPIFTKKLKGTSETEERGGTKQDQEVSTEEAPFPSLFSEEREDLDKIDEMEEIRVNGKDKINKDDEFHVRTYYKKVSENRDGNKENSNLKFFKIKKKEDHFLWFEKPFVTLVFDYKRWNRPNRYIKNEKIENTIRNEMSQYFFYTCKSDGKERISFTYPPNLSTFFEMIQKKIPSFTREKAPADQMSAYWSLMNEEKKNNLKNVFFNRIEALDKKRSFENILEKTTRFCHNETKKEYLPKLYDPFLHGISRGKVKKLLPFQIITETYINIGLGGSWINKIHGILLKINSKKFEQTLEKFNRKSLSVEKKLSFFSEPREEKSHSDEEIQIFKILFDVVITDNNNQTLIKNVIYFHEINKSVPQWSYKLTSELEELEGENEENVPTEPGIRSRKAKPVVVFTDKESHNGIYTNLKDNQNFDQKDEMALIRYSQHSDFRRDLIKGSMRSQRRKTVIWEFFQAKVHSPLFFDRIDKLFFFSFDLWGLKKTILRNLMWKKKKKKIDKNEEEQLKRKERRRMEIAETWDSFLFSQTIRGFLLVTQSILRKYLILPLLIIIKNSTRALLFQVPEWSEDLKDWKREMHIKCTYNGVQLSETEFPRNWLTDGIQIKIIFPFYLKPWHKSKVQSSQKARLKKTKDKGEKNDFGFLTVWGMETELPFGSAKKKPSFFEPIFKELKKRIKKFKRKPFWVLSIFKERATILLKVAKEIKNWILQNLLFLKGKIKNISKQNRMPLFDLREISELNETKKDSIMSNQMIYGLSVQKKSMEWTNSSLSENKIKNLIDRIKTIKNQTEEILKEKENLTNTNRCNKPRYDSKIIESSKKSWQTFKRKNIRLIRKFFFFFKFCIEQLFRTIFLGIINIPRITTQLFFESTKEILDKSIYIYKNEENGEKNKNKKNTIFFISTIKNLISKKKIFSYDLCSLSQAYVFYKLSQIQVSNFSKLKAVLEYNICITSFFIKNQLKDLVQEQGILDYELKDKTFLNSQVNQWKHWLRSNSQYNLPQVAWARLVTQRWKKKINQDSLVLNQSLIKTDSYEKNKFDKFDNYKKQNFFEANSLLNPKLNLKKDYRYNLFCYKFIHSREKMFDMSIGIALDNCLVSSFLEKYNIRVIEEIGHRKYLDWRILNFLFIKKVNMRPWVDTKSKKKDSRTKVQNYQKIDKITKTDLANKKSFFFDWMGMNEEILNRRLTNFEFFFFPEFVLFSSTYKTKPWVIPIKLLLFNFNEKKNVNKKITLKNKGFISSNEKGSLWFYNLNKEENGLAGQGELESDNEKQRNPESVLLNQEKNIDENYAESKIKKRQNKKQYKSNTEAELELFLTRYSRFQLRWNCFLNQKIINNIKVYCLLVRLKNPNEITISCIERGELSLDILMIEKNFTFTKLMKKGMLIVEPVRLSVKNDGQLIIYRTIGISLVHKNKPKISKRYKNIDKKNNYDCFIPENILSPKRRREFRILICFNLKKKNARDRNSRFDKNIKNLTTVLHKKKDLDKDKKTLIKLKSFLWPNFRLEDLACMNRYWFNTTNGNRFSMIRIHMYTRFKIH.

Transmembrane regions (helical) follow at residues 19–39 (IINS…FSIG), 68–88 (FIAG…HLAL), 91–111 (PHTI…WNNN), 133–153 (VFLN…SSML), 176–196 (VGWL…LVWI), and 227–247 (IFSI…PSPI). Residues 251–275 (KLKGTSETEERGGTKQDQEVSTEEA) are disordered. The segment covering 254 to 268 (GTSETEERGGTKQDQ) has biased composition (basic and acidic residues).

This sequence belongs to the TIC214 family. In terms of assembly, part of the Tic complex.

Its subcellular location is the plastid. The protein resides in the chloroplast inner membrane. In terms of biological role, involved in protein precursor import into chloroplasts. May be part of an intermediate translocation complex acting as a protein-conducting channel at the inner envelope. This chain is Protein TIC 214, found in Draba nemorosa (Woodland whitlowgrass).